We begin with the raw amino-acid sequence, 107 residues long: Acidic phospholipase A2 braziliase-I (107 aa).

Disulfide bonds link cysteine 26-cysteine 100, cysteine 28-cysteine 44, cysteine 43-cysteine 86, cysteine 49-cysteine 107, cysteine 50-cysteine 79, cysteine 57-cysteine 72, and cysteine 66-cysteine 77. 3 residues coordinate Ca(2+): tyrosine 27, glycine 29, and glycine 31. Histidine 47 is a catalytic residue. Aspartate 48 serves as a coordination point for Ca(2+). The active site involves aspartate 80.

In terms of assembly, monomer. The cofactor is Ca(2+). As to expression, expressed by the venom gland.

The protein resides in the secreted. The catalysed reaction is a 1,2-diacyl-sn-glycero-3-phosphocholine + H2O = a 1-acyl-sn-glycero-3-phosphocholine + a fatty acid + H(+). Snake venom phospholipase A2 (PLA2) that induces significant edematogenic activity. Shows mild cytotoxicity on Trypanosoma cruzi and Leishmania infantum. Also inhibits ADP- and collagen-induced platelet aggregation. Does not show myotoxic activity. The protein is Acidic phospholipase A2 braziliase-I of Bothrops brazili (Brazil's lancehead).